The chain runs to 694 residues: Rabphilin-3A (694 aa).

Residues methionine 1–arginine 12 show a composition bias toward polar residues. The segment at methionine 1–threonine 51 is disordered. Residues glutamine 44 to glycine 160 enclose the RabBD domain. The FYVE-type zinc finger occupies glycine 92–glutamate 148. The Zn(2+) site is built by cysteine 98, cysteine 101, cysteine 115, cysteine 118, cysteine 123, cysteine 126, cysteine 140, and cysteine 143. The interval leucine 166 to aspartate 388 is disordered. Positions proline 177 to alanine 186 are enriched in low complexity. Basic and acidic residues predominate over residues alanine 202–glycine 211. Omega-N-methylarginine is present on arginine 226. Serine 272 carries the phosphoserine modification. Residues proline 352–arginine 370 are compositionally biased toward low complexity. Acidic residues predominate over residues proline 375–aspartate 388. The C2 1 domain occupies threonine 392–isoleucine 514. Ca(2+) contacts are provided by methionine 422, aspartate 423, aspartate 429, aspartate 484, glutamate 485, aspartate 486, glutamate 492, glutamate 539, aspartate 581, aspartate 587, aspartate 641, tyrosine 642, aspartate 643, and aspartate 649. Residues glutamate 550–histidine 683 form the C2 2 domain. Serine 692 and serine 693 each carry phosphoserine.

In terms of assembly, interacts with RAB3B, RAB3C, RAB3D, RAB8A, RAB27A and RAB27B. Interacts with RAB3A; this interaction recruits RPH3A to synaptic vesicules. Interacts (via C2B domain) with SNAP25. Interacts with deubiquitinating enzyme CAND1; this interaction results in the deubiquitination of RPH3A. Interacts with GRIN2A and DLG4; this ternary complex regulates NMDA receptor composition at postsynaptic membranes. Interacts with SNCA. The cofactor is Ca(2+). Ubiquitinated. Deubiquitinated by CAND1 to prevent its degradation.

The protein localises to the cytoplasmic vesicle. Its subcellular location is the secretory vesicle. The protein resides in the synaptic vesicle membrane. It is found in the cell projection. It localises to the dendritic spine. The protein localises to the postsynaptic cell membrane. Its subcellular location is the membrane. Its function is as follows. Plays an essential role in docking and fusion steps of regulated exocytosis. At the presynaptic level, RPH3A is recruited by RAB3A to the synaptic vesicle membrane in a GTP-dependent manner where it modulates synaptic vesicle trafficking and calcium-triggered neurotransmitter release. In the post-synaptic compartment, forms a ternary complex with GRIN2A and DLG4 and regulates NMDA receptor stability. Also plays a role in the exocytosis of arginine vasopressin hormone. In Homo sapiens (Human), this protein is Rabphilin-3A (RPH3A).